The chain runs to 485 residues: Polyol:NADP oxidoreductase (485 aa).

This sequence belongs to the mannitol dehydrogenase family.

It localises to the cytoplasm. The polypeptide is Polyol:NADP oxidoreductase (por) (Gluconobacter oxydans (strain 621H) (Gluconobacter suboxydans)).